The chain runs to 432 residues: Glutamyl-tRNA reductase (432 aa).

Residues 49-52 (TCNR), S107, 112-114 (ETQ), and Q118 each bind substrate. The Nucleophile role is filled by C50. 186-191 (GAGEMG) is a binding site for NADP(+).

The protein belongs to the glutamyl-tRNA reductase family. In terms of assembly, homodimer.

The enzyme catalyses (S)-4-amino-5-oxopentanoate + tRNA(Glu) + NADP(+) = L-glutamyl-tRNA(Glu) + NADPH + H(+). It participates in porphyrin-containing compound metabolism; protoporphyrin-IX biosynthesis; 5-aminolevulinate from L-glutamyl-tRNA(Glu): step 1/2. Functionally, catalyzes the NADPH-dependent reduction of glutamyl-tRNA(Glu) to glutamate 1-semialdehyde (GSA). In Campylobacter jejuni subsp. jejuni serotype O:23/36 (strain 81-176), this protein is Glutamyl-tRNA reductase.